The sequence spans 192 residues: Ribosomal RNA small subunit methyltransferase G (192 aa).

Residues glycine 63, leucine 68, 112–113, and arginine 125 contribute to the S-adenosyl-L-methionine site; that span reads IE.

This sequence belongs to the methyltransferase superfamily. RNA methyltransferase RsmG family.

The protein localises to the cytoplasm. It carries out the reaction guanosine(527) in 16S rRNA + S-adenosyl-L-methionine = N(7)-methylguanosine(527) in 16S rRNA + S-adenosyl-L-homocysteine. Functionally, specifically methylates the N7 position of guanine in position 527 of 16S rRNA. The chain is Ribosomal RNA small subunit methyltransferase G from Rickettsia rickettsii (strain Iowa).